The following is a 362-amino-acid chain: MGSSFGDLFRVSTFGESHGGSVGVIVEGCPPRLEIDLEKIQEELDRRRPGQSKITTPRKELDQVEILSGIANRETLGTPIAMIVRNRDQRPSDYKEMKNIFRPSHADGTYHLKYGIQAPSGGGRASARETIGRVAAGAIAKQLLQKVQNTQILAWVKRIHNIEAEIDINTIGFADIESNIVRCPNQDVAKLMIQRIEEISRDGDSCGGLIECVVRNVPAGLGMPVFDKLEADLSKALMSLPATKGFEVGSGFRGTFLKGSEHNDAFIAGDKNRLRTATNNSGGIQGGISNGEPIILRVGFKPTATIRKDQQTIDSEGKQITLASKGRHDPCVLPRAVPMVEAMVSIVLADHLLRQRGQCSLW.

Arg47 lines the NADP(+) pocket. FMN is bound by residues 124-126, Gly286, 301-305, and Arg327; these read RAS and KPTAT.

This sequence belongs to the chorismate synthase family. As to quaternary structure, homotetramer. FMNH2 is required as a cofactor.

The catalysed reaction is 5-O-(1-carboxyvinyl)-3-phosphoshikimate = chorismate + phosphate. It participates in metabolic intermediate biosynthesis; chorismate biosynthesis; chorismate from D-erythrose 4-phosphate and phosphoenolpyruvate: step 7/7. In terms of biological role, catalyzes the anti-1,4-elimination of the C-3 phosphate and the C-6 proR hydrogen from 5-enolpyruvylshikimate-3-phosphate (EPSP) to yield chorismate, which is the branch point compound that serves as the starting substrate for the three terminal pathways of aromatic amino acid biosynthesis. This reaction introduces a second double bond into the aromatic ring system. This is Chorismate synthase from Prochlorococcus marinus (strain SARG / CCMP1375 / SS120).